The chain runs to 518 residues: Probable cytochrome P450 317a1 (518 aa).

Cys461 is a binding site for heme.

It belongs to the cytochrome P450 family. Requires heme as cofactor.

The protein resides in the endoplasmic reticulum membrane. It localises to the microsome membrane. In terms of biological role, may be involved in the metabolism of insect hormones and in the breakdown of synthetic insecticides. In Drosophila melanogaster (Fruit fly), this protein is Probable cytochrome P450 317a1 (Cyp317a1).